The sequence spans 100 residues: MAKVKIKPLSDRVVIKPEPPEEKTESGLYIPDTAKEKPQRGTVIAVGPGRVENGTKIEMSVKEGDKVLYGKYAGTEITIDGEEYLIMRETDILGIIEEEK.

This sequence belongs to the GroES chaperonin family. In terms of assembly, heptamer of 7 subunits arranged in a ring. Interacts with the chaperonin GroEL.

It is found in the cytoplasm. In terms of biological role, together with the chaperonin GroEL, plays an essential role in assisting protein folding. The GroEL-GroES system forms a nano-cage that allows encapsulation of the non-native substrate proteins and provides a physical environment optimized to promote and accelerate protein folding. GroES binds to the apical surface of the GroEL ring, thereby capping the opening of the GroEL channel. The chain is Co-chaperonin GroES from Rhodothermus marinus (Rhodothermus obamensis).